The chain runs to 296 residues: 4-hydroxy-tetrahydrodipicolinate synthase (296 aa).

A pyruvate-binding site is contributed by T49. Catalysis depends on Y137, which acts as the Proton donor/acceptor. The Schiff-base intermediate with substrate role is filled by K166. Residue I208 coordinates pyruvate.

The protein belongs to the DapA family. In terms of assembly, homotetramer; dimer of dimers.

It localises to the cytoplasm. It catalyses the reaction L-aspartate 4-semialdehyde + pyruvate = (2S,4S)-4-hydroxy-2,3,4,5-tetrahydrodipicolinate + H2O + H(+). It participates in amino-acid biosynthesis; L-lysine biosynthesis via DAP pathway; (S)-tetrahydrodipicolinate from L-aspartate: step 3/4. Its function is as follows. Catalyzes the condensation of (S)-aspartate-beta-semialdehyde [(S)-ASA] and pyruvate to 4-hydroxy-tetrahydrodipicolinate (HTPA). The sequence is that of 4-hydroxy-tetrahydrodipicolinate synthase from Chlorobium luteolum (strain DSM 273 / BCRC 81028 / 2530) (Pelodictyon luteolum).